A 374-amino-acid chain; its full sequence is UPF0754 membrane protein SA1664 (374 aa).

2 helical membrane passes run 4–24 (LFIIIFMIVVGAIIGGITNVI) and 354–374 (SLGFILGGIIGFFQGLVAIFV).

It belongs to the UPF0754 family.

The protein localises to the cell membrane. This chain is UPF0754 membrane protein SA1664, found in Staphylococcus aureus (strain N315).